Consider the following 668-residue polypeptide: Spindle assembly abnormal protein 6 homolog (668 aa).

Residues 39–91 (VHKKELVVRLSDDTDPFFLYNLTLGEEDFQSLKNQQGLLVEFSAFPQRFIDLL) form the PISA domain. A coiled-coil region spans residues 182-482 (LGVTQQALAE…NVIAWLNKQL (301 aa)). The interval 623–668 (GSVPVKGQRNGSSAGTVPVRPALPKSGSSPILSAYFPGQQSRLPAS) is disordered.

In terms of assembly, nine homodimers form a cartwheel structure with an internal diameter of 23 nM and radial spokes connecting to the microtubule triplets.

It localises to the cytoplasm. It is found in the cytoskeleton. The protein resides in the microtubule organizing center. The protein localises to the centrosome. Functionally, central scaffolding component of the centrioles ensuring their 9-fold symmetry. Required for centrosome biogenesis and duplication: required both for mother-centriole-dependent centriole duplication and deuterosome-dependent centriole amplification in multiciliated cells. The protein is Spindle assembly abnormal protein 6 homolog (sas6) of Xenopus laevis (African clawed frog).